The following is a 218-amino-acid chain: ETS domain-containing protein ets-7 (218 aa).

Residues 12–93 (QRLLNFLRGL…KGKDSRYCFL (82 aa)) constitute a DNA-binding region (ETS). Residues 131 to 161 (TSNFSLQSSPSSSSNSSSARTMSATSSPTSS) are compositionally biased toward low complexity. Residues 131–162 (TSNFSLQSSPSSSSNSSSARTMSATSSPTSSL) form a disordered region.

Belongs to the ETS family.

It is found in the nucleus. Functionally, probable transcription factor. Involved in responses to oxidative stress. This chain is ETS domain-containing protein ets-7, found in Caenorhabditis elegans.